Consider the following 321-residue polypeptide: tRNA 2-thiolation protein NcsA (321 aa).

A Glycyl lysine isopeptide (Lys-Gly) (interchain with G-Cter in SAMP2) cross-link involves residue K204.

Belongs to the TtcA family. CTU1/NCS6/ATPBD3 subfamily. Interacts with monomeric and polymeric forms of SAMP2. Interacts with UbaA. Interacts with archaeal EF-1-alpha and Pan1. Non-sampylated protein forms a complex with archaeal CPSF1 of approximately 100 kDa. In terms of processing, sampylated at Lys-204 with the archaeal ubiquitin-like protein SAMP2. Polymeric chains of SAMP2 are also linked.

Its pathway is tRNA modification; 5-methoxycarbonylmethyl-2-thiouridine-tRNA biosynthesis. In terms of biological role, required for thiolation of mcm(5)S(2)U at the wobble uridine position of tRNA specific for lysine (tRNA(Lys)). Probably acts by catalyzing adenylation of tRNA, an intermediate required for 2-thiolation. May also act as a sulfurtransferase that transfers sulfur from thiocarboxylated SAMP2 onto the uridine of tRNA at wobble position. Required for cell growth at elevated temperatures. This is tRNA 2-thiolation protein NcsA from Haloferax volcanii (strain ATCC 29605 / DSM 3757 / JCM 8879 / NBRC 14742 / NCIMB 2012 / VKM B-1768 / DS2) (Halobacterium volcanii).